Consider the following 492-residue polypeptide: MSLWINGEWRPGRGPGFSKQDPVNLKVVWQGEAADAGQVAEAVAAARQAFPSWARLPFAARQAIVEKFAALLEASKAELTAVIGAETGKPRWEAAGEVTAMINKVAISVKAYHVRTGEQHSDLPDGAATLRHRPHGVLAVFGPYNFPGHLPNGHIVPALLAGNTVVFKPSELTPRSGEAVVKLWQQAGLPAGVLNLVQGGRETGEALSGQADIDGLLFTGSSTTGFHLHRQLAGQPQKILALEMGGNNPLIVDDPRDVDAVVHLTIQSAFITAGQRCTCARRLLVRRGEAGDAFLSRLVTVSQRLIPAAWDAEPQPFLGGLISEQAAQKVHQAWLQRVAAGAVTLLEPRLLQAGTSLLTPGIVDMSDVANVEDEEVFGPLLGVWRYDTFEEAIALANATRFGLSCGLISPEREKFDRLLLEARAGIVNWNKPLTGAASTAPFGGTGASGNHRPGAWYAADYCAWPMASLESPTLTLPASLSPGLDFLAGEAS.

NAD(+) is bound at residue 220-225 (GSSTTG). Active-site residues include Glu243 and Cys277.

Belongs to the aldehyde dehydrogenase family. AstD subfamily.

It carries out the reaction N-succinyl-L-glutamate 5-semialdehyde + NAD(+) + H2O = N-succinyl-L-glutamate + NADH + 2 H(+). The protein operates within amino-acid degradation; L-arginine degradation via AST pathway; L-glutamate and succinate from L-arginine: step 4/5. Catalyzes the NAD-dependent reduction of succinylglutamate semialdehyde into succinylglutamate. This is N-succinylglutamate 5-semialdehyde dehydrogenase from Klebsiella pneumoniae subsp. pneumoniae (strain ATCC 700721 / MGH 78578).